A 536-amino-acid chain; its full sequence is Major facilitator superfamily domain-containing protein 4B (536 aa).

12 helical membrane-spanning segments follow: residues 19-39 (LTYWSVFFSFGLSIAFLGPTI), 53-73 (ITWVFFAQQLCLLIGSSSGGA), 81-101 (ALLALFLSSLIISVVFSIIPL), 105-125 (VLLLAIAMAVSGLAMGIIDTI), 140-160 (IFLQALHFFIGLGALLSPLIA), 211-231 (YAFWIMALINLPVPIAVFVLM), 297-317 (FFLIHIFGGMVLFMTEGIMGV), 341-361 (LNCIFWAAITAGRLVSIPLSY), 366-386 (VHLLLTNMAGVIVTLLLLMIL), 391-411 (VFLFVGTTFLGLFISSVFPCL), 428-448 (VLVTLSGMGEMTLQVLAGTLI), and 456-476 (FLVCGLVIGCLGFIFLLSVIL).

This sequence belongs to the major facilitator superfamily.

It localises to the membrane. This Danio rerio (Zebrafish) protein is Major facilitator superfamily domain-containing protein 4B.